A 429-amino-acid polypeptide reads, in one-letter code: DNA dC-&gt;dU-editing enzyme APOBEC3 (429 aa).

CMP/dCMP-type deaminase domains lie at D38 to A154 and E238 to L357. H71 contacts Zn(2+). Residue E73 is the Proton donor of the active site. Zn(2+)-binding residues include C105, C108, H288, C316, and C319.

Belongs to the cytidine and deoxycytidylate deaminase family. Homodimer. Zn(2+) is required as a cofactor.

Its subcellular location is the cytoplasm. It catalyses the reaction a 2'-deoxycytidine in single-stranded DNA + H2O + H(+) = a 2'-deoxyuridine in single-stranded DNA + NH4(+). Its function is as follows. DNA deaminase (cytidine deaminase) which acts as an inhibitor of retrovirus replication and retrotransposon mobility via deaminase-dependent and -independent mechanisms. Selectively targets single-stranded DNA and does not deaminate double-stranded DNA or single- or double-stranded RNA. This is DNA dC-&gt;dU-editing enzyme APOBEC3 (Apobec3) from Rattus norvegicus (Rat).